The primary structure comprises 196 residues: Ribonuclease HII (196 aa).

Residues 9–196 enclose the RNase H type-2 domain; the sequence is SLIAGVDEVG…APVKRAIGLK (188 aa). A divalent metal cation contacts are provided by aspartate 15, glutamate 16, and aspartate 107.

This sequence belongs to the RNase HII family. Mn(2+) serves as cofactor. Requires Mg(2+) as cofactor.

The protein localises to the cytoplasm. The catalysed reaction is Endonucleolytic cleavage to 5'-phosphomonoester.. Its function is as follows. Endonuclease that specifically degrades the RNA of RNA-DNA hybrids. In Photorhabdus laumondii subsp. laumondii (strain DSM 15139 / CIP 105565 / TT01) (Photorhabdus luminescens subsp. laumondii), this protein is Ribonuclease HII.